Consider the following 143-residue polypeptide: Transcriptional regulator MraZ (143 aa).

SpoVT-AbrB domains lie at 5-47 (EYQH…PKDE) and 76-119 (AIES…SKDN).

The protein belongs to the MraZ family. In terms of assembly, forms oligomers.

The protein localises to the cytoplasm. It is found in the nucleoid. This Oenococcus oeni (strain ATCC BAA-331 / PSU-1) protein is Transcriptional regulator MraZ.